Here is a 429-residue protein sequence, read N- to C-terminus: 3-phosphoshikimate 1-carboxyvinyltransferase (429 aa).

Residues lysine 23, serine 24, and arginine 28 each coordinate 3-phosphoshikimate. Residue lysine 23 participates in phosphoenolpyruvate binding. Positions 97 and 125 each coordinate phosphoenolpyruvate. 3-phosphoshikimate is bound by residues serine 170, serine 171, glutamine 172, serine 198, aspartate 314, asparagine 338, and lysine 342. Residue glutamine 172 participates in phosphoenolpyruvate binding. Residue aspartate 314 is the Proton acceptor of the active site. Positions 346, 388, and 413 each coordinate phosphoenolpyruvate.

This sequence belongs to the EPSP synthase family. Monomer.

It localises to the cytoplasm. The enzyme catalyses 3-phosphoshikimate + phosphoenolpyruvate = 5-O-(1-carboxyvinyl)-3-phosphoshikimate + phosphate. Its pathway is metabolic intermediate biosynthesis; chorismate biosynthesis; chorismate from D-erythrose 4-phosphate and phosphoenolpyruvate: step 6/7. Functionally, catalyzes the transfer of the enolpyruvyl moiety of phosphoenolpyruvate (PEP) to the 5-hydroxyl of shikimate-3-phosphate (S3P) to produce enolpyruvyl shikimate-3-phosphate and inorganic phosphate. This is 3-phosphoshikimate 1-carboxyvinyltransferase from Pectobacterium carotovorum subsp. carotovorum (strain PC1).